A 361-amino-acid polypeptide reads, in one-letter code: Probable cytosolic iron-sulfur protein assembly protein 1 (361 aa).

7 WD repeats span residues 10-49 (AHSD…NFPQ), 56-105 (THKR…TEIL), 120-160 (GHEN…EEFE), 167-206 (DHQH…DDWS), 213-265 (GHEG…SIKH), 280-319 (VHQY…SWSI), and 327-361 (HGVH…IWKP).

It belongs to the WD repeat CIA1 family. In terms of assembly, interacts with NAR1.

It localises to the cytoplasm. It is found in the nucleus. Its function is as follows. Essential component of the cytosolic iron-sulfur (Fe/S) protein assembly machinery. Required for the maturation of extramitochondrial Fe/S proteins. This chain is Probable cytosolic iron-sulfur protein assembly protein 1, found in Scheffersomyces stipitis (strain ATCC 58785 / CBS 6054 / NBRC 10063 / NRRL Y-11545) (Yeast).